The chain runs to 83 residues: Small ribosomal subunit protein bS16c (83 aa).

This sequence belongs to the bacterial ribosomal protein bS16 family.

The protein resides in the plastid. Its subcellular location is the chloroplast. This is Small ribosomal subunit protein bS16c from Chaetosphaeridium globosum (Charophycean green alga).